Consider the following 337-residue polypeptide: Monoacylglycerol lipase ABHD6 (337 aa).

The Extracellular segment spans residues 1–8 (MDLDVVNM). Residues 9–29 (FVIAGGTLAIPILAFVASFLL) form a helical; Signal-anchor for type II membrane protein membrane-spanning segment. The Cytoplasmic segment spans residues 30–337 (WPSALIRIYY…HNTDNNKKLD (308 aa)). The 242-residue stretch at 72–313 (PSILMLHGFS…CGHSVVMERP (242 aa)) folds into the AB hydrolase-1 domain. A (9Z)-octadecenoate-binding site is contributed by Phe80. The active-site Nucleophile is Ser148. Met149 is a (9Z)-octadecenoate binding site. Residues Asp278 and His306 each act as charge relay system in the active site. His306 is a (9Z)-octadecenoate binding site.

This sequence belongs to the AB hydrolase superfamily.

The protein resides in the late endosome membrane. It is found in the lysosome membrane. Its subcellular location is the mitochondrion membrane. It carries out the reaction Hydrolyzes glycerol monoesters of long-chain fatty acids.. It catalyses the reaction 1-octanoylglycerol + H2O = octanoate + glycerol + H(+). The enzyme catalyses 1-decanoylglycerol + H2O = decanoate + glycerol + H(+). The catalysed reaction is 1-dodecanoylglycerol + H2O = dodecanoate + glycerol + H(+). It carries out the reaction 1-tetradecanoylglycerol + H2O = tetradecanoate + glycerol + H(+). It catalyses the reaction 2-hexadecanoylglycerol + H2O = glycerol + hexadecanoate + H(+). The enzyme catalyses 2-(9Z-octadecenoyl)-glycerol + H2O = glycerol + (9Z)-octadecenoate + H(+). The catalysed reaction is 1-(9Z-octadecenoyl)-glycerol + H2O = glycerol + (9Z)-octadecenoate + H(+). It carries out the reaction 2-(9Z,12Z-octadecadienoyl)-glycerol + H2O = (9Z,12Z)-octadecadienoate + glycerol + H(+). It catalyses the reaction 2-(5Z,8Z,11Z,14Z-eicosatetraenoyl)-glycerol + H2O = glycerol + (5Z,8Z,11Z,14Z)-eicosatetraenoate + H(+). The enzyme catalyses 1-(5Z,8Z,11Z,14Z-eicosatetraenoyl)-glycerol + H2O = glycerol + (5Z,8Z,11Z,14Z)-eicosatetraenoate + H(+). The catalysed reaction is 1-(9Z,12Z-octadecadienoyl)-glycerol + H2O = (9Z,12Z)-octadecadienoate + glycerol + H(+). It carries out the reaction 3-(9Z-octadecenoyl)-sn-glycero-1-phospho-(3'-(9Z-octadecenoyl)-1'-sn-glycerol) + H2O = 3-(9Z-octadecenoyl)-sn-glycero-1-phospho-(1'-sn-glycerol) + (9Z)-octadecenoate + H(+). It catalyses the reaction (S,S)-2-(9Z-octadecenoyl)-sn-glycero-1-phospho-(2'-(9Z-octadecenoyl)-1'-sn-glycerol) + H2O = (S,S)-2-(9Z-octadecenoyl)-sn-glycero-1-phospho-(1'-sn-glycerol) + (9Z)-octadecenoate + H(+). The enzyme catalyses (R,R)-2-(9Z-octadecenoyl)-sn-glycero-3-phospho-(2'-(9Z-octadecenoyl)-3'-sn-glycerol) + H2O = (R,R)-2-(9Z-octadecenoyl)-sn-glycero-3-phospho-(3'-sn-glycerol) + (9Z)-octadecenoate + H(+). Functionally, lipase that preferentially hydrolysis medium-chain saturated monoacylglycerols including 2-arachidonoylglycerol. Through 2-arachidonoylglycerol degradation may regulate endocannabinoid signaling pathways. Also has a lysophosphatidyl lipase activity with a preference for lysophosphatidylglycerol among other lysophospholipids. Also able to degrade bis(monoacylglycero)phosphate (BMP) and constitutes the major enzyme for BMP catabolism. BMP, also known as lysobisphosphatidic acid, is enriched in late endosomes and lysosomes and plays a key role in the formation of intraluminal vesicles and in lipid sorting. The polypeptide is Monoacylglycerol lipase ABHD6 (Homo sapiens (Human)).